A 100-amino-acid chain; its full sequence is Large ribosomal subunit protein bL21 (100 aa).

Belongs to the bacterial ribosomal protein bL21 family. In terms of assembly, part of the 50S ribosomal subunit. Contacts protein L20.

This protein binds to 23S rRNA in the presence of protein L20. In Wolbachia pipientis wMel, this protein is Large ribosomal subunit protein bL21.